The chain runs to 619 residues: Xyloglucan galactosyltransferase MUR3 (619 aa).

Positions 1 to 26 (MFPRVSMRRRSAEVSPTEPMEKGNGK) are disordered. Over 1 to 33 (MFPRVSMRRRSAEVSPTEPMEKGNGKNQTNRIC) the chain is Cytoplasmic. The chain crosses the membrane as a helical; Signal-anchor for type II membrane protein span at residues 34-54 (LLVALSLFFWALLLYFHFVVL). At 55 to 619 (GTSNIDKQLQ…WKSEQRDKTQ (565 aa)) the chain is on the lumenal side. 7 N-linked (GlcNAc...) asparagine glycosylation sites follow: asparagine 116, asparagine 146, asparagine 231, asparagine 257, asparagine 319, asparagine 465, and asparagine 482. A disordered region spans residues 576-619 (HVWDPFFSKPKPGEDGSSDGNGGTTISADAAKNSWKSEQRDKTQ). Basic and acidic residues predominate over residues 610 to 619 (WKSEQRDKTQ).

It belongs to the glycosyltransferase 47 family. Interacts with CSLC4 and FUT1. In terms of tissue distribution, ubiquitous.

It is found in the golgi apparatus. It localises to the golgi stack membrane. Its subcellular location is the golgi apparatus membrane. Its function is as follows. Involved in the attachment of the Gal residue on the third xylosyl unit within the XXXG core structure of xyloglucan, the principal glycan that interlaces the cellulose microfibrils in plant cell wall. Associates with other xyloglucan-synthesizing enzymes to form multiprotein complexes for xyloglucan synthesis in the Golgi. Interacts with actin and is required for the proper endomembrane organization and for the cell elongation. Not involved in the trafficking from the endoplasmic reticulum to the vacuoles. Involved in salt stress tolerance. Participates in the control of the expression of genes encoding for proteins involved in reactive oxygen species (ROS) detoxification under salt stress. May contribute to the maintenance of the proper organization of actin microfilaments during salt stress-induced ROS production. This Arabidopsis thaliana (Mouse-ear cress) protein is Xyloglucan galactosyltransferase MUR3.